Here is a 250-residue protein sequence, read N- to C-terminus: 5'-nucleotidase SurE (250 aa).

Residues aspartate 8, aspartate 9, serine 39, and asparagine 95 each coordinate a divalent metal cation.

It belongs to the SurE nucleotidase family. A divalent metal cation is required as a cofactor.

Its subcellular location is the cytoplasm. It catalyses the reaction a ribonucleoside 5'-phosphate + H2O = a ribonucleoside + phosphate. Functionally, nucleotidase that shows phosphatase activity on nucleoside 5'-monophosphates. The sequence is that of 5'-nucleotidase SurE from Cupriavidus necator (strain ATCC 17699 / DSM 428 / KCTC 22496 / NCIMB 10442 / H16 / Stanier 337) (Ralstonia eutropha).